The sequence spans 378 residues: Erythronate-4-phosphate dehydrogenase (378 aa).

Residues Ser45 and Thr66 each contribute to the substrate site. 2 residues coordinate NAD(+): Asp146 and Thr175. Arg208 is an active-site residue. Position 232 (Asp232) interacts with NAD(+). Glu237 is a catalytic residue. The active-site Proton donor is the His254. Gly257 provides a ligand contact to NAD(+). Tyr258 is a binding site for substrate.

Belongs to the D-isomer specific 2-hydroxyacid dehydrogenase family. PdxB subfamily. Homodimer.

It is found in the cytoplasm. It carries out the reaction 4-phospho-D-erythronate + NAD(+) = (R)-3-hydroxy-2-oxo-4-phosphooxybutanoate + NADH + H(+). It participates in cofactor biosynthesis; pyridoxine 5'-phosphate biosynthesis; pyridoxine 5'-phosphate from D-erythrose 4-phosphate: step 2/5. Catalyzes the oxidation of erythronate-4-phosphate to 3-hydroxy-2-oxo-4-phosphonooxybutanoate. The chain is Erythronate-4-phosphate dehydrogenase from Escherichia fergusonii (strain ATCC 35469 / DSM 13698 / CCUG 18766 / IAM 14443 / JCM 21226 / LMG 7866 / NBRC 102419 / NCTC 12128 / CDC 0568-73).